The primary structure comprises 111 residues: UPF0060 membrane protein Cbei_2176 (111 aa).

4 helical membrane-spanning segments follow: residues 7–27 (ILYFILAGIFEIGGGYLIWIW), 33–53 (SYLYGVIGAVILILYGIIPTL), 60–80 (FGKVYAAYGGIFIVMSILWGW), and 85–105 (IVPDKFDLIGGCIALVGVIVI).

It belongs to the UPF0060 family.

Its subcellular location is the cell membrane. The chain is UPF0060 membrane protein Cbei_2176 from Clostridium beijerinckii (strain ATCC 51743 / NCIMB 8052) (Clostridium acetobutylicum).